The chain runs to 908 residues: Autophagy-related protein 9 (908 aa).

The Cytoplasmic portion of the chain corresponds to Met1–Arg216. Positions Ser64–His162 are disordered. A helical membrane pass occupies residues Val217–Val237. Residues Asp238–Asn259 are Lumenal-facing. N-linked (GlcNAc...) asparagine glycosylation is present at Asn259. The helical transmembrane segment at Met260–Ile280 threads the bilayer. The Cytoplasmic portion of the chain corresponds to Gln281 to Arg433. The stretch at Phe434 to Ile454 is an intramembrane region. Residues Val455–Ser525 lie on the Cytoplasmic side of the membrane. The chain crosses the membrane as a helical span at residues Phe526 to Phe546. Residues Leu547 to Arg555 are Lumenal-facing. Residues Thr556–Ser576 traverse the membrane as a helical segment. Topologically, residues Glu577 to Lys622 are cytoplasmic. The stretch at Leu623–Ser643 is an intramembrane region. Residues Leu644–Arg908 lie on the Cytoplasmic side of the membrane. 2 disordered regions span residues Ala751–Ala779 and Gln809–Val878. Gly residues predominate over residues Gly813 to Ser825. The span at Gln839 to Leu852 shows a compositional bias: basic and acidic residues.

It belongs to the ATG9 family. As to quaternary structure, homotrimer; forms a homotrimer with a central pore that forms a path between the two membrane leaflets. Post-translationally, phosphorylated by apg-1. Apg-1 phosphorylation is required for preautophagosome elongation.

Its subcellular location is the preautophagosomal structure membrane. The protein localises to the cytoplasmic vesicle membrane. It localises to the golgi apparatus membrane. It is found in the endoplasmic reticulum membrane. The enzyme catalyses a 1,2-diacyl-sn-glycero-3-phosphocholine(in) = a 1,2-diacyl-sn-glycero-3-phosphocholine(out). The catalysed reaction is a 1,2-diacyl-sn-glycero-3-phospho-L-serine(in) = a 1,2-diacyl-sn-glycero-3-phospho-L-serine(out). It catalyses the reaction a 1,2-diacyl-sn-glycero-3-phosphoethanolamine(in) = a 1,2-diacyl-sn-glycero-3-phosphoethanolamine(out). It carries out the reaction a 1,2-diacyl-sn-glycero-3-phospho-(1D-myo-inositol-3-phosphate)(in) = a 1,2-diacyl-sn-glycero-3-phospho-(1D-myo-inositol-3-phosphate)(out). In terms of biological role, phospholipid scramblase involved in autophagy and cytoplasm to vacuole transport (Cvt) vesicle formation. Cycles between the preautophagosomal structure/phagophore assembly site (PAS) and the cytoplasmic vesicle pool and supplies membrane for the growing autophagosome. Lipid scramblase activity plays a key role in preautophagosomal structure/phagophore assembly by distributing the phospholipids that arrive through atg-2 from the cytoplasmic to the luminal leaflet of the bilayer, thereby driving autophagosomal membrane expansion. Required for mitophagy. Also involved in endoplasmic reticulum-specific autophagic process and is essential for the survival of cells subjected to severe ER stress. Different machineries are required for anterograde trafficking to the PAS during either the Cvt pathway or bulk autophagy and for retrograde trafficking. This is Autophagy-related protein 9 (apg-7) from Neurospora crassa (strain ATCC 24698 / 74-OR23-1A / CBS 708.71 / DSM 1257 / FGSC 987).